The sequence spans 874 residues: Cap-specific mRNA (nucleoside-2'-O-)-methyltransferase 1A (874 aa).

Residues 1–10 (MSERGDDDRT) are compositionally biased toward basic and acidic residues. The disordered stretch occupies residues 1 to 64 (MSERGDDDRT…APPTKQKTKA (64 aa)). A G-patch domain is found at 60-106 (QKTKAEEMMERMGYKAGEGLGKNKQGIQEPVALSTQRGKTGLGHEGA). Residues 211–440 (FFQNRAAMKT…ERYITCKGLR (230 aa)) enclose the RrmJ-type SAM-dependent 2'-O-MTase domain. Residues G273 and D354 each contribute to the S-adenosyl-L-methionine site. The active-site Proton acceptor is K394. The disordered stretch occupies residues 535–555 (PNKQRPRGGDRGSRNGNQERL).

It carries out the reaction a 5'-end (N(7)-methyl 5'-triphosphoguanosine)-ribonucleoside in mRNA + S-adenosyl-L-methionine = a 5'-end (N(7)-methyl 5'-triphosphoguanosine)-(2'-O-methyl-ribonucleoside) in mRNA + S-adenosyl-L-homocysteine + H(+). Functionally, S-adenosyl-L-methionine-dependent methyltransferase that mediates mRNA cap1 2'-O-ribose methylation to the 5'-cap structure of mRNAs. Methylates the ribose of the first nucleotide of a m(7)GpppG-capped mRNA to produce m(7)GpppNmp (cap1). Cap1 modification is linked to higher levels of translation. The sequence is that of Cap-specific mRNA (nucleoside-2'-O-)-methyltransferase 1A from Caenorhabditis briggsae.